We begin with the raw amino-acid sequence, 208 residues long: Platelet-activating factor receptor (208 aa).

The Extracellular segment spans residues 1-16; it reads MEPHDSSHVDSEFRYT. The chain crosses the membrane as a helical span at residues 17–38; it reads LFPIVYSIIFVLGVIANGYVLW. Residues 39-54 are Cytoplasmic-facing; that stretch reads VFARLYPSKKFNEIKI. A helical transmembrane segment spans residues 55–74; that stretch reads FMVNLTMADMLFLITLPLWI. Over 75 to 91 the chain is Extracellular; sequence VYYQNGGNWIFPKFLCN. C90 and C173 form a disulfide bridge. Residues 92 to 113 traverse the membrane as a helical segment; sequence LAGCLFFINTYCSVAFLGVITY. Residues 114–133 lie on the Cytoplasmic side of the membrane; that stretch reads NRFQAVTRPIKTAQANTRKR. A helical membrane pass occupies residues 134-155; that stretch reads GISLSLVIWVAIVGAASYFFIL. Topologically, residues 156-184 are extracellular; it reads DSTNTVPNSAGSGNITRCFEHYEKGSVPV. Residue N169 is glycosylated (N-linked (GlcNAc...) asparagine). A helical transmembrane segment spans residues 185–205; the sequence is LIIHIFIVFSFFLVFLIILFC. Residues 206-208 lie on the Cytoplasmic side of the membrane; that stretch reads NLV.

This sequence belongs to the G-protein coupled receptor 1 family. As to quaternary structure, interacts with ARRB1.

It is found in the cell membrane. Receptor for platelet activating factor, a chemotactic phospholipid mediator that possesses potent inflammatory, smooth-muscle contractile and hypotensive activity. Seems to mediate its action via a G protein that activates a phosphatidylinositol-calcium second messenger system. This Macaca mulatta (Rhesus macaque) protein is Platelet-activating factor receptor (PTAFR).